We begin with the raw amino-acid sequence, 418 residues long: Gamma-glutamyl phosphate reductase (418 aa).

The protein belongs to the gamma-glutamyl phosphate reductase family.

Its subcellular location is the cytoplasm. The catalysed reaction is L-glutamate 5-semialdehyde + phosphate + NADP(+) = L-glutamyl 5-phosphate + NADPH + H(+). It functions in the pathway amino-acid biosynthesis; L-proline biosynthesis; L-glutamate 5-semialdehyde from L-glutamate: step 2/2. Catalyzes the NADPH-dependent reduction of L-glutamate 5-phosphate into L-glutamate 5-semialdehyde and phosphate. The product spontaneously undergoes cyclization to form 1-pyrroline-5-carboxylate. The protein is Gamma-glutamyl phosphate reductase of Geobacter metallireducens (strain ATCC 53774 / DSM 7210 / GS-15).